We begin with the raw amino-acid sequence, 962 residues long: Translation initiation factor IF-2 (962 aa).

The disordered stretch occupies residues 99-366 (VKAAQTQAAP…KKGKKLKLEP (268 aa)). Over residues 117 to 141 (DAAKARAEAAARAEARAKAEAEAAK) the composition is skewed to basic and acidic residues. Residues 145-155 (AKAGNKAKPAA) are compositionally biased toward low complexity. Positions 173-216 (KPAEESKAEKAQADKMPSEKPAEPKEKAAKPKHERNGKGKDAKK) are enriched in basic and acidic residues. Over residues 219–234 (KPAAPAVPQPVVSAEE) the composition is skewed to low complexity. Basic and acidic residues predominate over residues 235 to 269 (QAQRDEEARRAAALRAHQEALLKEKQERQARREAM). Residues 270–283 (KQQAEQQAKAAQEA) show a composition bias toward low complexity. Basic and acidic residues-rich tracts occupy residues 314-327 (AKKE…DEGQ) and 338-354 (GGRD…ERVR). The tr-type G domain occupies 462–631 (PRPPVVTVMG…LLEAEVLELT (170 aa)). The tract at residues 471 to 478 (GHVDHGKT) is G1. 471–478 (GHVDHGKT) serves as a coordination point for GTP. The tract at residues 496 to 500 (GITQH) is G2. The segment at 517–520 (DTPG) is G3. Residues 517-521 (DTPGH) and 571-574 (NKID) each bind GTP. The interval 571–574 (NKID) is G4. The G5 stretch occupies residues 607-609 (SAK).

This sequence belongs to the TRAFAC class translation factor GTPase superfamily. Classic translation factor GTPase family. IF-2 subfamily.

The protein localises to the cytoplasm. Its function is as follows. One of the essential components for the initiation of protein synthesis. Protects formylmethionyl-tRNA from spontaneous hydrolysis and promotes its binding to the 30S ribosomal subunits. Also involved in the hydrolysis of GTP during the formation of the 70S ribosomal complex. The sequence is that of Translation initiation factor IF-2 from Neisseria meningitidis serogroup B (strain ATCC BAA-335 / MC58).